The chain runs to 31 residues: ESAPAPEVSGDAVFSAIQNGXLKNLGNAFFW.

It is found in the secreted. Functionally, antifungal activity against C.albicans ATCC 76615. This is Antifungal protein 1 from Musca domestica (House fly).